The following is a 185-amino-acid chain: HTH-type transcriptional regulator SAB2452 (185 aa).

The HTH tetR-type domain occupies 6–66; sequence IENRQRIEEI…YVIQRDLNTF (61 aa). A DNA-binding region (H-T-H motif) is located at residues 29–48; it reads SMNRIAKELGIGMGTLYRHF.

The polypeptide is HTH-type transcriptional regulator SAB2452 (Staphylococcus aureus (strain bovine RF122 / ET3-1)).